The following is a 352-amino-acid chain: D-alanine--D-alanine ligase (352 aa).

The region spanning 133 to 342 is the ATP-grasp domain; it reads KTVFAAAGLP…FPKLVDRLIQ (210 aa). 169–224 contacts ATP; that stretch reads DETIGYPNFVKPANLGSSVGISKVRSRLELEAALDSAASFDRRIVVEAGVVAREVE. Residues Asp-295, Glu-309, and Asn-311 each contribute to the Mg(2+) site.

It belongs to the D-alanine--D-alanine ligase family. Mg(2+) is required as a cofactor. The cofactor is Mn(2+).

The protein resides in the cytoplasm. The catalysed reaction is 2 D-alanine + ATP = D-alanyl-D-alanine + ADP + phosphate + H(+). The protein operates within cell wall biogenesis; peptidoglycan biosynthesis. Cell wall formation. This is D-alanine--D-alanine ligase from Acaryochloris marina (strain MBIC 11017).